A 410-amino-acid polypeptide reads, in one-letter code: Multifunctional CCA protein (410 aa).

ATP is bound by residues Gly8 and Arg11. The CTP site is built by Gly8 and Arg11. Mg(2+) is bound by residues Glu21 and Asp23. Residues Arg91, Arg137, and Arg140 each contribute to the ATP site. CTP-binding residues include Arg91, Arg137, and Arg140. Residues 228 to 329 (TGIHSLMTLR…VKLLEQVDAF (102 aa)) form the HD domain.

This sequence belongs to the tRNA nucleotidyltransferase/poly(A) polymerase family. Bacterial CCA-adding enzyme type 1 subfamily. Monomer. Can also form homodimers and oligomers. Mg(2+) serves as cofactor. Requires Ni(2+) as cofactor.

It carries out the reaction a tRNA precursor + 2 CTP + ATP = a tRNA with a 3' CCA end + 3 diphosphate. It catalyses the reaction a tRNA with a 3' CCA end + 2 CTP + ATP = a tRNA with a 3' CCACCA end + 3 diphosphate. Catalyzes the addition and repair of the essential 3'-terminal CCA sequence in tRNAs without using a nucleic acid template. Adds these three nucleotides in the order of C, C, and A to the tRNA nucleotide-73, using CTP and ATP as substrates and producing inorganic pyrophosphate. tRNA 3'-terminal CCA addition is required both for tRNA processing and repair. Also involved in tRNA surveillance by mediating tandem CCA addition to generate a CCACCA at the 3' terminus of unstable tRNAs. While stable tRNAs receive only 3'-terminal CCA, unstable tRNAs are marked with CCACCA and rapidly degraded. This is Multifunctional CCA protein from Legionella pneumophila (strain Lens).